The chain runs to 314 residues: Lipoyl synthase (314 aa).

7 residues coordinate [4Fe-4S] cluster: C40, C45, C51, C67, C71, C74, and S280. Residues 53 to 269 (SERKTATFMI…KNIALEKGFS (217 aa)) form the Radical SAM core domain.

The protein belongs to the radical SAM superfamily. Lipoyl synthase family. Requires [4Fe-4S] cluster as cofactor.

The protein localises to the cytoplasm. The enzyme catalyses [[Fe-S] cluster scaffold protein carrying a second [4Fe-4S](2+) cluster] + N(6)-octanoyl-L-lysyl-[protein] + 2 oxidized [2Fe-2S]-[ferredoxin] + 2 S-adenosyl-L-methionine + 4 H(+) = [[Fe-S] cluster scaffold protein] + N(6)-[(R)-dihydrolipoyl]-L-lysyl-[protein] + 4 Fe(3+) + 2 hydrogen sulfide + 2 5'-deoxyadenosine + 2 L-methionine + 2 reduced [2Fe-2S]-[ferredoxin]. Its pathway is protein modification; protein lipoylation via endogenous pathway; protein N(6)-(lipoyl)lysine from octanoyl-[acyl-carrier-protein]. Functionally, catalyzes the radical-mediated insertion of two sulfur atoms into the C-6 and C-8 positions of the octanoyl moiety bound to the lipoyl domains of lipoate-dependent enzymes, thereby converting the octanoylated domains into lipoylated derivatives. In Oceanobacillus iheyensis (strain DSM 14371 / CIP 107618 / JCM 11309 / KCTC 3954 / HTE831), this protein is Lipoyl synthase.